A 291-amino-acid polypeptide reads, in one-letter code: Beta-lactamase CTX-M-14 (291 aa).

A signal peptide spans 1–28 (MVTKRVQRMMFAAAACIPLLLGSAPLYA). Catalysis depends on serine 73, which acts as the Nucleophile; acyl-ester intermediate. A beta-lactam is bound by residues lysine 76, serine 133, glutamate 169, and serine 240.

The protein belongs to the class-A beta-lactamase family. In terms of assembly, monomer.

It localises to the secreted. The catalysed reaction is a beta-lactam + H2O = a substituted beta-amino acid. Inhibited by the beta-lactamase-blocking agents clavulanic acid, tazobactam and sulbactam. Its function is as follows. Extended-spectrum beta-lactamase (ESBL) which confers resistance to penicillins, as well as first, second, and third-generation cephalosporins. Has cefotaxime-hydrolyzing activity. The polypeptide is Beta-lactamase CTX-M-14 (Escherichia coli).